Consider the following 72-residue polypeptide: Translation initiation factor IF-1 (72 aa).

The S1-like domain occupies 1-72; that stretch reads MAKEGNIEME…SKGRIVYRAR (72 aa).

Belongs to the IF-1 family. Component of the 30S ribosomal translation pre-initiation complex which assembles on the 30S ribosome in the order IF-2 and IF-3, IF-1 and N-formylmethionyl-tRNA(fMet); mRNA recruitment can occur at any time during PIC assembly.

It is found in the cytoplasm. One of the essential components for the initiation of protein synthesis. Stabilizes the binding of IF-2 and IF-3 on the 30S subunit to which N-formylmethionyl-tRNA(fMet) subsequently binds. Helps modulate mRNA selection, yielding the 30S pre-initiation complex (PIC). Upon addition of the 50S ribosomal subunit IF-1, IF-2 and IF-3 are released leaving the mature 70S translation initiation complex. The protein is Translation initiation factor IF-1 of Hahella chejuensis (strain KCTC 2396).